We begin with the raw amino-acid sequence, 500 residues long: Phosphatidylserine decarboxylase proenzyme 1, mitochondrial (500 aa).

Residues 1 to 48 (MSIMPVKNALAQGRTLLMGRMPAVKFSTRMQLRNRTAVLWNRKFSTRL) constitute a mitochondrion; not cleaved when targeted to the endoplasmic reticulum transit peptide. Asparagine 34 carries N-linked (GlcNAc...) asparagine glycosylation. The Mitochondrial matrix segment spans residues 45-79 (STRLFVQQRRSSGEIVDRAKAAAANSGRKQVSMKW). Residues 57 to 101 (GEIVDRAKAAAANSGRKQVSMKWVVLTSFTIVLGTILLVSRNDST) are enables targeting to the endoplasmic reticulum in addition to mitochondria. A helical membrane pass occupies residues 80 to 98 (VVLTSFTIVLGTILLVSRN). At 99-500 (DSTEEDATEG…LGIIGKNDLK (402 aa)) the chain is on the mitochondrial intermembrane side. Residues aspartate 210, histidine 348, and serine 463 each act as charge relay system; for autoendoproteolytic cleavage activity in the active site. The active-site Schiff-base intermediate with substrate; via pyruvic acid; for decarboxylase activity is the serine 463. Serine 463 carries the pyruvic acid (Ser); by autocatalysis modification. Positions 475–492 (FKFDVRVGDKVKMGQKLG) are required for processing and stability.

This sequence belongs to the phosphatidylserine decarboxylase family. PSD-B subfamily. Eukaryotic type I sub-subfamily. In terms of assembly, heterodimer of a large membrane-associated beta subunit and a small pyruvoyl-containing alpha subunit. It depends on pyruvate as a cofactor. Glycosylated at Asn-34 in the endoplasmic reticulum. In terms of processing, the precursor is imported via the TOM complex into mitochondria, where the N-terminal presequence is cleaved by the matrix-located proteases MPP (MAS1-MAS2) and OCT1. Post-translationally, is synthesized initially as an inactive proenzyme. Formation of the active enzyme involves a self-maturation process in which the active site pyruvoyl group is generated from an internal serine residue via an autocatalytic post-translational modification. Two non-identical subunits are generated from the proenzyme in this reaction, and the pyruvate is formed at the N-terminus of the alpha chain, which is derived from the carboxyl end of the proenzyme. The autoendoproteolytic cleavage occurs by a canonical serine protease mechanism, in which the side chain hydroxyl group of the serine supplies its oxygen atom to form the C-terminus of the beta chain, while the remainder of the serine residue undergoes an oxidative deamination to produce ammonia and the pyruvoyl prosthetic group on the alpha chain. During this reaction, the Ser that is part of the protease active site of the proenzyme becomes the pyruvoyl prosthetic group, which constitutes an essential element of the active site of the mature decarboxylase.

The protein localises to the mitochondrion inner membrane. Its subcellular location is the lipid droplet. It is found in the endoplasmic reticulum membrane. It catalyses the reaction a 1,2-diacyl-sn-glycero-3-phospho-L-serine + H(+) = a 1,2-diacyl-sn-glycero-3-phosphoethanolamine + CO2. It participates in phospholipid metabolism; phosphatidylethanolamine biosynthesis; phosphatidylethanolamine from CDP-diacylglycerol: step 2/2. Its function is as follows. Catalyzes the formation of phosphatidylethanolamine (PtdEtn) from phosphatidylserine (PtdSer). Plays a central role in phospholipid metabolism and in the interorganelle trafficking of phosphatidylserine. Phosphatidylethanolamine formed in the mitochondria is exported to other membranes to fullfill their requirements for PtdEtn. Required for normal mitochondrial morphology and proper mitochondrial fusion during yeast mating. Involved in lipid droplet biogenesis at the endoplasmic reticulum membrane. Required for induction of mitophagy during nitrogen starvation. Appears to play a specific role in supporting respiratory complex III activity. In Saccharomyces cerevisiae (strain ATCC 204508 / S288c) (Baker's yeast), this protein is Phosphatidylserine decarboxylase proenzyme 1, mitochondrial.